Here is a 1515-residue protein sequence, read N- to C-terminus: Glutamate synthase [NADPH] large chain (1515 aa).

Positions 1 to 36 (MTTELNQGEQFVADFRANAAALTTANAYNPEDEHDA) are excised as a propeptide. The For GATase activity role is filled by Cys-37. The 396-residue stretch at 37–432 (CGVGFIAAID…PGEMIAVDLQ (396 aa)) folds into the Glutamine amidotransferase type-2 domain. Positions 916 to 937 (AKSDSGEGGEDPARFRPDKNGD) are disordered. Positions 926–936 (DPARFRPDKNG) are enriched in basic and acidic residues. Residues 1085–1142 (LSEV…IMVR) and 1086–1142 (SEVH…IMVR) contribute to the FMN site. Positions 1138, 1144, and 1149 each coordinate [3Fe-4S] cluster.

This sequence belongs to the glutamate synthase family. Aggregate of 4 catalytic active heterodimers, consisting of a large and a small subunit. It depends on [3Fe-4S] cluster as a cofactor. The cofactor is FAD. Requires FMN as cofactor.

The catalysed reaction is 2 L-glutamate + NADP(+) = L-glutamine + 2-oxoglutarate + NADPH + H(+). It participates in amino-acid biosynthesis; L-glutamate biosynthesis via GLT pathway; L-glutamate from 2-oxoglutarate and L-glutamine (NADP(+) route): step 1/1. The protein operates within energy metabolism; nitrogen metabolism. This chain is Glutamate synthase [NADPH] large chain (gltB), found in Azospirillum brasilense.